The chain runs to 412 residues: Keratin, type I microfibrillar 48 kDa, component 8C-1 (412 aa).

Ser-1 is modified (N-acetylserine). The head stretch occupies residues 1-55 (SFNFCLPNLSFRSSCSSRPCVPSSCCGTTLPGACNIPANVGSCNWFCEGSFDGNE). The region spanning 55-366 (EKETMQFLND…GLLDSEDCKL (312 aa)) is the IF rod domain. The segment at 56–90 (KETMQFLNDRLASYLEKVRQLERENAELESRILER) is coil 1A. Positions 91–101 (SQQQEPLVCPN) are linker 1. The coil 1B stretch occupies residues 102 to 202 (YQSYFRTIEE…HEEEVNTLRS (101 aa)). Residues 203–218 (QLGDRLNVEVDAAPTV) are linker 12. The coil 2 stretch occupies residues 219–362 (DLNRVLNETR…NTYRGLLDSE (144 aa)). Residues 363 to 412 (DCKLPCNPCATTNACGKTITPCISSPCAPAAPCTPCVPRSRCGPCNSYVR) form a tail region.

It belongs to the intermediate filament family.

Functionally, wool microfibrillar keratin. The polypeptide is Keratin, type I microfibrillar 48 kDa, component 8C-1 (Ovis aries (Sheep)).